A 157-amino-acid chain; its full sequence is MPLYEHVFLARQDASTQQVEELTTQITGVIEGLGGKVVKMEAWGVRSLTYRMNKNRKAHFVLLNIDGPSAVVAEVERQERINEDVIRYLTVRVDEHEEGPSAMMRKADRDRDRDERGGGGFRGDREGGFRGDREGGGFRGDRGPRRPRDDAPAATEE.

The span at 96–151 (HEEGPSAMMRKADRDRDRDERGGGGFRGDREGGFRGDREGGGFRGDRGPRRPRDDA) shows a compositional bias: basic and acidic residues. The tract at residues 96–157 (HEEGPSAMMR…RDDAPAATEE (62 aa)) is disordered.

This sequence belongs to the bacterial ribosomal protein bS6 family.

Its function is as follows. Binds together with bS18 to 16S ribosomal RNA. This chain is Small ribosomal subunit protein bS6, found in Rhodopseudomonas palustris (strain BisA53).